The sequence spans 51 residues: Protein Tat (51 aa).

Positions 1 to 25 are enriched in polar residues; sequence EAETATKSCSGRQANQVSLPKQPAS. A disordered region spans residues 1-51; it reads EAETATKSCSGRQANQVSLPKQPASQPRGDPTGPKESKKKVETETETDPVN. Lys21 participates in a covalent cross-link: Glycyl lysine isopeptide (Lys-Gly) (interchain with G-Cter in ubiquitin). Positions 28 to 30 match the Cell attachment site motif; it reads RGD. Positions 33-43 are enriched in basic and acidic residues; the sequence is GPKESKKKVET.

Belongs to the lentiviruses Tat family. Interacts with host CCNT1. Associates with the P-TEFb complex composed at least of Tat, P-TEFb (CDK9 and CCNT1), TAR RNA, RNA Pol II. Recruits the HATs CREBBP, TAF1/TFIID, EP300, PCAF and GCN5L2. Interacts with host KAT5/Tip60; this interaction targets the latter to degradation. Interacts with the host deacetylase SIRT1. Interacts with host capping enzyme RNGTT; this interaction stimulates RNGTT. Binds to host KDR, and to the host integrins ITGAV/ITGB3 and ITGA5/ITGB1. Interacts with host KPNB1/importin beta-1 without previous binding to KPNA1/importin alpha-1. Interacts with EIF2AK2. Interacts with host nucleosome assembly protein NAP1L1; this interaction may be required for the transport of Tat within the nucleus, since the two proteins interact at the nuclear rim. Interacts with host C1QBP/SF2P32; this interaction involves lysine-acetylated Tat. Interacts with the host chemokine receptors CCR2, CCR3 and CXCR4. Interacts with host DPP4/CD26; this interaction may trigger an anti-proliferative effect. Interacts with host LDLR. Interacts with the host extracellular matrix metalloproteinase MMP1. Interacts with host PRMT6; this interaction mediates Tat's methylation. Interacts with, and is ubiquitinated by MDM2/Hdm2. Interacts with host PSMC3 and HTATIP2. Interacts with STAB1; this interaction may overcome SATB1-mediated repression of IL2 and IL2RA (interleukin) in T cells by binding to the same domain than HDAC1. Interacts (when acetylated) with human CDK13, thereby increasing HIV-1 mRNA splicing and promoting the production of the doubly spliced HIV-1 protein Nef. In terms of processing, acetylation by EP300, CREBBP, GCN5L2/GCN5 and PCAF regulates the transactivation activity of Tat. Post-translationally, phosphorylated by EIF2AK2 on serine and threonine residues adjacent to the basic region important for TAR RNA binding and function. Phosphorylation of Tat by EIF2AK2 is dependent on the prior activation of EIF2AK2 by dsRNA. Asymmetrical arginine methylation by host PRMT6 seems to diminish the transactivation capacity of Tat and affects the interaction with host CCNT1. In terms of processing, polyubiquitination by MDM2 does not target Tat to degradation, but activates its transactivation function and fosters interaction with CCNT1 and TAR RNA.

Its subcellular location is the host nucleus. The protein resides in the host nucleolus. The protein localises to the host cytoplasm. It localises to the secreted. Transcriptional activator that increases RNA Pol II processivity, thereby increasing the level of full-length viral transcripts. Recognizes a hairpin structure at the 5'-LTR of the nascent viral mRNAs referred to as the transactivation responsive RNA element (TAR) and recruits the cyclin T1-CDK9 complex (P-TEFb complex) that will in turn hyperphosphorylate the RNA polymerase II to allow efficient elongation. The CDK9 component of P-TEFb and other Tat-activated kinases hyperphosphorylate the C-terminus of RNA Pol II that becomes stabilized and much more processive. Other factors such as HTATSF1/Tat-SF1, SUPT5H/SPT5, and HTATIP2 are also important for Tat's function. Besides its effect on RNA Pol II processivity, Tat induces chromatin remodeling of proviral genes by recruiting the histone acetyltransferases (HATs) CREBBP, EP300 and PCAF to the chromatin. This also contributes to the increase in proviral transcription rate, especially when the provirus integrates in transcriptionally silent region of the host genome. To ensure maximal activation of the LTR, Tat mediates nuclear translocation of NF-kappa-B by interacting with host RELA. Through its interaction with host TBP, Tat may also modulate transcription initiation. Tat can reactivate a latently infected cell by penetrating in it and transactivating its LTR promoter. In the cytoplasm, Tat is thought to act as a translational activator of HIV-1 mRNAs. In terms of biological role, extracellular circulating Tat can be endocytosed by surrounding uninfected cells via the binding to several surface receptors such as CD26, CXCR4, heparan sulfate proteoglycans (HSPG) or LDLR. Neurons are rarely infected, but they internalize Tat via their LDLR. Endosomal low pH allows Tat to cross the endosome membrane to enter the cytosol and eventually further translocate into the nucleus, thereby inducing severe cell dysfunctions ranging from cell activation to cell death. Through its interaction with nuclear HATs, Tat is potentially able to control the acetylation-dependent cellular gene expression. Tat seems to inhibit the HAT activity of KAT5/Tip60 and TAF1, and consequently modify the expression of specific cellular genes. Modulates the expression of many cellular genes involved in cell survival, proliferation or in coding for cytokines (such as IL10) or cytokine receptors. May be involved in the derepression of host interleukin IL2 expression. Mediates the activation of cyclin-dependent kinases and dysregulation of microtubule network. Tat plays a role in T-cell and neurons apoptosis. Tat induced neurotoxicity and apoptosis probably contribute to neuroAIDS. Host extracellular matrix metalloproteinase MMP1 cleaves Tat and decreases Tat's mediated neurotoxicity. Circulating Tat also acts as a chemokine-like and/or growth factor-like molecule that binds to specific receptors on the surface of the cells, affecting many cellular pathways. In the vascular system, Tat binds to ITGAV/ITGB3 and ITGA5/ITGB1 integrins dimers at the surface of endothelial cells and competes with bFGF for heparin-binding sites, leading to an excess of soluble bFGF. Binds to KDR/VEGFR-2. All these Tat-mediated effects enhance angiogenesis in Kaposi's sarcoma lesions. The protein is Protein Tat of Homo sapiens (Human).